A 413-amino-acid polypeptide reads, in one-letter code: PAB1-binding protein 2 (413 aa).

Residues 1 to 23 (MSTETTKPSITTTPTTVLVSPNT) are compositionally biased toward low complexity. The tract at residues 1-36 (MSTETTKPSITTTPTTVLVSPNTLKRKKGEDTSEEQ) is disordered. 3 consecutive KH domains span residues 66–130 (DVHL…YGMI), 148–213 (EISI…TFYI), and 330–394 (FVQQ…IMLI).

As to quaternary structure, interacts with PAB1.

The protein resides in the nucleus. This chain is PAB1-binding protein 2 (PBP2), found in Saccharomyces cerevisiae (strain ATCC 204508 / S288c) (Baker's yeast).